A 164-amino-acid polypeptide reads, in one-letter code: MAKNSKKVKSNTNKANNFKLLAENRYAKFQYAISETIEAGIELLGTEVKSIRNGKANLRDGYCSFRDGEILLLNVHISPHKNVGSFFNHDPLRNRKLLLHKKEIIKMKSNTEKKGMTIVPLSLYLKGSWIKITLGVGKGKKLHDKRQDEKQKSIKKEINSALKR.

Residues Lys141–Arg164 form a disordered region. Residues Lys145–Ile158 are compositionally biased toward basic and acidic residues.

The protein belongs to the SmpB family.

Its subcellular location is the cytoplasm. In terms of biological role, required for rescue of stalled ribosomes mediated by trans-translation. Binds to transfer-messenger RNA (tmRNA), required for stable association of tmRNA with ribosomes. tmRNA and SmpB together mimic tRNA shape, replacing the anticodon stem-loop with SmpB. tmRNA is encoded by the ssrA gene; the 2 termini fold to resemble tRNA(Ala) and it encodes a 'tag peptide', a short internal open reading frame. During trans-translation Ala-aminoacylated tmRNA acts like a tRNA, entering the A-site of stalled ribosomes, displacing the stalled mRNA. The ribosome then switches to translate the ORF on the tmRNA; the nascent peptide is terminated with the 'tag peptide' encoded by the tmRNA and targeted for degradation. The ribosome is freed to recommence translation, which seems to be the essential function of trans-translation. The polypeptide is SsrA-binding protein (Prochlorococcus marinus (strain MIT 9301)).